A 192-amino-acid polypeptide reads, in one-letter code: MDIKLVVGLGNPGKEYEKTRHNVGFMVIDELVKALRAKGPFEEALSHVYKARIGGKEVILAKPMTYMNNSGAAVYNLLEEYKLSPEQMIVVYDDLDLPLGHMRLRLKGSSGGHRGVESIIKYIGTQNFPRLRIGIGRPKKKEDVVKYVLSPFSPEEEKVISQVIKKAVRCLMRAIEISPEHAMEYCNRQDLI.

Tyr-16 serves as a coordination point for tRNA. His-21 (proton acceptor) is an active-site residue. 2 residues coordinate tRNA: Tyr-66 and Asn-68.

The protein belongs to the PTH family. Monomer.

The protein localises to the cytoplasm. The enzyme catalyses an N-acyl-L-alpha-aminoacyl-tRNA + H2O = an N-acyl-L-amino acid + a tRNA + H(+). In terms of biological role, hydrolyzes ribosome-free peptidyl-tRNAs (with 1 or more amino acids incorporated), which drop off the ribosome during protein synthesis, or as a result of ribosome stalling. Catalyzes the release of premature peptidyl moieties from peptidyl-tRNA molecules trapped in stalled 50S ribosomal subunits, and thus maintains levels of free tRNAs and 50S ribosomes. This chain is Peptidyl-tRNA hydrolase, found in Aquifex aeolicus (strain VF5).